We begin with the raw amino-acid sequence, 147 residues long: Leech anti-platelet protein (147 aa).

The signal sequence occupies residues 1-21 (MNSFLFSLACSLLVAIPAISA). The tract at residues 21–71 (AQDEDAGGAGDETSEGEDTTGSDETPSTGGGGDGGNEETITAGNEDCWSKR) is disordered. Over residues 22 to 41 (QDEDAGGAGDETSEGEDTTG) the composition is skewed to acidic residues. 3 disulfides stabilise this stretch: Cys67/Cys145, Cys92/Cys117, and Cys96/Cys105.

Post-translationally, the N-terminus is blocked. Expressed by salivary glands.

The protein resides in the secreted. Its function is as follows. Inhibits collagen-stimulated platelet aggregation (IC(50)=60 nM), dense granule release and serotonin release. Does not inhibit platelet aggregation induced by ADP, arachidonic acid, and thrombin. This Haementeria officinalis (Mexican leech) protein is Leech anti-platelet protein.